Here is a 558-residue protein sequence, read N- to C-terminus: Chaperonin GroEL 1 (558 aa).

ATP-binding positions include T29–P32, D86–T90, G413, and D494.

It belongs to the chaperonin (HSP60) family. Forms a cylinder of 14 subunits composed of two heptameric rings stacked back-to-back. Interacts with the co-chaperonin GroES.

The protein resides in the cytoplasm. It carries out the reaction ATP + H2O + a folded polypeptide = ADP + phosphate + an unfolded polypeptide.. Together with its co-chaperonin GroES, plays an essential role in assisting protein folding. The GroEL-GroES system forms a nano-cage that allows encapsulation of the non-native substrate proteins and provides a physical environment optimized to promote and accelerate protein folding. This chain is Chaperonin GroEL 1, found in Acaryochloris marina (strain MBIC 11017).